The primary structure comprises 42 residues: Large ribosomal subunit protein P2 (42 aa).

The protein belongs to the eukaryotic ribosomal protein P1/P2 family. In terms of assembly, P1 and P2 exist as dimers at the large ribosomal subunit. Phosphorylated.

Plays an important role in the elongation step of protein synthesis. In Triticum aestivum (Wheat), this protein is Large ribosomal subunit protein P2.